The chain runs to 411 residues: Multidrug resistance protein MdtG (411 aa).

10 helical membrane passes run 14-34 (LFVA…IMPF), 56-76 (LVFS…GGLA), 89-109 (ALGM…WQFL), 113-133 (AVLG…ATQV), 144-164 (TLST…GLLA), 171-191 (PVFY…LLYV), 219-239 (ILSL…IAPI), 254-274 (LAFV…MSAP), 288-308 (ILVF…FVQT), and 376-396 (AVFC…WWCL).

The protein belongs to the major facilitator superfamily. DHA1 family. MdtG (TC 2.A.1.2.20) subfamily.

It is found in the cell inner membrane. This Serratia proteamaculans (strain 568) protein is Multidrug resistance protein MdtG.